Consider the following 211-residue polypeptide: Thiamine-phosphate synthase (211 aa).

Residues 37 to 41 and asparagine 69 contribute to the 4-amino-2-methyl-5-(diphosphooxymethyl)pyrimidine site; that span reads QLRIK. The Mg(2+) site is built by aspartate 70 and aspartate 89. Serine 108 lines the 4-amino-2-methyl-5-(diphosphooxymethyl)pyrimidine pocket. 2-[(2R,5Z)-2-carboxy-4-methylthiazol-5(2H)-ylidene]ethyl phosphate is bound at residue 134-136; it reads TQT. Lysine 137 provides a ligand contact to 4-amino-2-methyl-5-(diphosphooxymethyl)pyrimidine. Residues glycine 166 and 186–187 contribute to the 2-[(2R,5Z)-2-carboxy-4-methylthiazol-5(2H)-ylidene]ethyl phosphate site; that span reads VS.

This sequence belongs to the thiamine-phosphate synthase family. Requires Mg(2+) as cofactor.

It carries out the reaction 2-[(2R,5Z)-2-carboxy-4-methylthiazol-5(2H)-ylidene]ethyl phosphate + 4-amino-2-methyl-5-(diphosphooxymethyl)pyrimidine + 2 H(+) = thiamine phosphate + CO2 + diphosphate. It catalyses the reaction 2-(2-carboxy-4-methylthiazol-5-yl)ethyl phosphate + 4-amino-2-methyl-5-(diphosphooxymethyl)pyrimidine + 2 H(+) = thiamine phosphate + CO2 + diphosphate. The enzyme catalyses 4-methyl-5-(2-phosphooxyethyl)-thiazole + 4-amino-2-methyl-5-(diphosphooxymethyl)pyrimidine + H(+) = thiamine phosphate + diphosphate. It participates in cofactor biosynthesis; thiamine diphosphate biosynthesis; thiamine phosphate from 4-amino-2-methyl-5-diphosphomethylpyrimidine and 4-methyl-5-(2-phosphoethyl)-thiazole: step 1/1. Condenses 4-methyl-5-(beta-hydroxyethyl)thiazole monophosphate (THZ-P) and 2-methyl-4-amino-5-hydroxymethyl pyrimidine pyrophosphate (HMP-PP) to form thiamine monophosphate (TMP). The sequence is that of Thiamine-phosphate synthase from Salmonella typhimurium (strain LT2 / SGSC1412 / ATCC 700720).